The chain runs to 233 residues: Large ribosomal subunit protein uL1 (233 aa).

This sequence belongs to the universal ribosomal protein uL1 family. In terms of assembly, part of the 50S ribosomal subunit.

Its function is as follows. Binds directly to 23S rRNA. The L1 stalk is quite mobile in the ribosome, and is involved in E site tRNA release. Protein L1 is also a translational repressor protein, it controls the translation of the L11 operon by binding to its mRNA. This Syntrophotalea carbinolica (strain DSM 2380 / NBRC 103641 / GraBd1) (Pelobacter carbinolicus) protein is Large ribosomal subunit protein uL1.